We begin with the raw amino-acid sequence, 256 residues long: Protein FixA (256 aa).

Belongs to the ETF beta-subunit/FixA family. Heterodimer of FixA and FixB.

The protein operates within amine and polyamine metabolism; carnitine metabolism. In terms of biological role, required for anaerobic carnitine reduction. May bring reductant to CaiA. This chain is Protein FixA, found in Shigella flexneri serotype 5b (strain 8401).